The primary structure comprises 375 residues: Leucoanthocyanidin dioxygenase 1 (375 aa).

The Fe2OG dioxygenase domain maps to 218–317; it reads LLLQLKINYY…RLSWVVFCEP (100 aa). Residues His-242, Asp-244, and His-298 each contribute to the Fe cation site. Residue Arg-308 participates in 2-oxoglutarate binding.

The protein belongs to the iron/ascorbate-dependent oxidoreductase family. L-ascorbate is required as a cofactor. The cofactor is Fe(2+).

It carries out the reaction a (2R,3S,4S)-leucoanthocyanidin + 2-oxoglutarate + O2 = a 4-H-anthocyanidin with a 3-hydroxy group + succinate + CO2 + 2 H2O. It functions in the pathway pigment biosynthesis; anthocyanin biosynthesis. Its function is as follows. Involved in anthocyanin and protoanthocyanidin biosynthesis by catalyzing the oxidation of leucoanthocyanidins into anthocyanidins. This Oryza sativa subsp. japonica (Rice) protein is Leucoanthocyanidin dioxygenase 1.